A 62-amino-acid chain; its full sequence is Phycobilisome degradation protein NblA homolog 1 (62 aa).

The protein to Synechococcus PCC 7942 NblA and some, to chloroplast ycf18.

The polypeptide is Phycobilisome degradation protein NblA homolog 1 (Synechocystis sp. (strain ATCC 27184 / PCC 6803 / Kazusa)).